The primary structure comprises 984 residues: Vacuolar sorting protein 3 (984 aa).

Residues 21 to 339 (KIRALSLSPI…GCGPSLLAAD (319 aa)) enclose the CNH domain. A CHCR repeat occupies 663 to 844 (VLTSDKRTEE…YLDPQNGKEP (182 aa)).

The protein belongs to the TRAP1 family. Component of the class C core vacuole/endosome tethering (CORVET) complex. Their common core is composed of the class C Vps core proteins VPS11, VCL1, VPS18 and VPS33, which in CORVET further associates with VPS3. Interacts directly with VPS11. Binds to RABF2A and RABF2B.

The protein resides in the endosome membrane. The protein localises to the cytoplasm. Its function is as follows. Essential protein required during embryogenesis. Believed to act as a component of the putative class C core vacuole/endosome tethering (CORVET) endosomal tethering complexes. CORVET is required for vacuolar transport of SYP22. Involved in root development. Plays a role in vesicle-mediated protein trafficking of the endocytic membrane transport pathway. This chain is Vacuolar sorting protein 3, found in Arabidopsis thaliana (Mouse-ear cress).